Here is a 318-residue protein sequence, read N- to C-terminus: Deoxyhypusine hydroxylase (318 aa).

His-65, Glu-66, His-98, and Glu-99 together coordinate Fe cation. HEAT-like PBS-type repeat units lie at residues 96-122 (VRHEAAEALGALGFTESLPVLEKYYKE), 194-220 (YRYRVMFRLRNIGNEEAVLALTDGFKD), 225-251 (FRHEIAFVFGQMIAPASVPALIKVLEN), and 258-284 (VRHEAAEALGGIANDECLPVLKKFSKD). Fe cation contacts are provided by His-227, Glu-228, His-260, and Glu-261.

Belongs to the deoxyhypusine hydroxylase family. Requires Fe(2+) as cofactor.

It localises to the cytoplasm. It is found in the nucleus. It carries out the reaction [eIF5A protein]-deoxyhypusine + AH2 + O2 = [eIF5A protein]-hypusine + A + H2O. The protein operates within protein modification; eIF5A hypusination. Functionally, catalyzes the hydroxylation of the N(6)-(4-aminobutyl)-L-lysine intermediate to form hypusine, an essential post-translational modification only found in mature eIF-5A factor. This Schizosaccharomyces pombe (strain 972 / ATCC 24843) (Fission yeast) protein is Deoxyhypusine hydroxylase (lia1).